We begin with the raw amino-acid sequence, 335 residues long: Pyridoxal 5'-phosphate synthase subunit PdxS (335 aa).

D30 provides a ligand contact to D-ribose 5-phosphate. Residue K87 is the Schiff-base intermediate with D-ribose 5-phosphate of the active site. G159 is a D-ribose 5-phosphate binding site. Residue R171 participates in D-glyceraldehyde 3-phosphate binding. D-ribose 5-phosphate contacts are provided by residues G257 and 278–279 (GS).

This sequence belongs to the PdxS/SNZ family. As to quaternary structure, homohexamer. In the presence of PdxT, forms a dodecamer of heterodimers.

It carries out the reaction aldehydo-D-ribose 5-phosphate + D-glyceraldehyde 3-phosphate + L-glutamine = pyridoxal 5'-phosphate + L-glutamate + phosphate + 3 H2O + H(+). The protein operates within cofactor biosynthesis; pyridoxal 5'-phosphate biosynthesis. In terms of biological role, catalyzes the formation of pyridoxal 5'-phosphate from ribose 5-phosphate (RBP), glyceraldehyde 3-phosphate (G3P) and ammonia. The ammonia is provided by the PdxT subunit. Can also use ribulose 5-phosphate and dihydroxyacetone phosphate as substrates, resulting from enzyme-catalyzed isomerization of RBP and G3P, respectively. The sequence is that of Pyridoxal 5'-phosphate synthase subunit PdxS from Pyrococcus horikoshii (strain ATCC 700860 / DSM 12428 / JCM 9974 / NBRC 100139 / OT-3).